The chain runs to 124 residues: MKKLATAAAVAALLGASASASAWWGPGWGGPGYGSGMGDWMNDMFGDGYGDFNMSMSGGGRGYGRGNGYGRGYGYGNPYYGYGYPYYGGYGAPYGAYGAPYAFPYGAPYGAPVAPAAPAQSESK.

Positions 1 to 22 (MKKLATAAAVAALLGASASASA) are cleaved as a signal peptide.

The protein envelope of the sulfur globules is composed of the three different proteins CV1, CV2 and CV3.

Its function is as follows. Structural protein of the sulfur globules, which are intracellular globules that serve for sulfur storage in purple sulfur bacteria. The sequence is that of Sulfur globule protein CV2 (sgpB) from Allochromatium vinosum (strain ATCC 17899 / DSM 180 / NBRC 103801 / NCIMB 10441 / D) (Chromatium vinosum).